The chain runs to 266 residues: Putative deoxyribonuclease tatdn3 (266 aa).

6 residues coordinate Zn(2+): His9, His11, Glu103, His143, His166, and Asp214.

Belongs to the metallo-dependent hydrolases superfamily. TatD-type hydrolase family. Mn(2+) serves as cofactor. Ca(2+) is required as a cofactor. Requires Mg(2+) as cofactor. It depends on Zn(2+) as a cofactor.

The protein resides in the nucleus. With respect to regulation, the 3'-exonuclease activity is sensitive to the metal ion present in the active site, whereas the AP endodeoxyribonuclease activity is observed in a variety of divalent metal cofactors. 3'-exoxonuclease activity is suppressed in the presence of Ca(2+), Zn(2+) and Ni(2+). Exhibits 3'-exonuclease activities and apurinic/apyrimidinic (AP) endonuclease (in vitro). Show preferential AP endonuclease activity on double-stranded DNA substrates and 3'- exonuclease activity on single-stranded DNA. The sequence is that of Putative deoxyribonuclease tatdn3 (tatdn3) from Danio rerio (Zebrafish).